The following is a 149-amino-acid chain: UPF0260 protein PSEEN4031 (149 aa).

It belongs to the UPF0260 family.

This chain is UPF0260 protein PSEEN4031, found in Pseudomonas entomophila (strain L48).